The chain runs to 419 residues: S-adenosylmethionine synthase (419 aa).

His-15 serves as a coordination point for ATP. A Mg(2+)-binding site is contributed by Asp-17. Residue Glu-43 coordinates K(+). The L-methionine site is built by Glu-56 and Gln-100. The interval 100–110 (QSPDIAQGVDE) is flexible loop. Residues 171–173 (DGK), 248–249 (KF), Asp-257, 263–264 (RK), Ala-280, and Lys-284 each bind ATP. Asp-257 is an L-methionine binding site. Lys-288 contributes to the L-methionine binding site.

The protein belongs to the AdoMet synthase family. As to quaternary structure, homotetramer; dimer of dimers. Requires Mg(2+) as cofactor. K(+) is required as a cofactor.

The protein resides in the cytoplasm. The catalysed reaction is L-methionine + ATP + H2O = S-adenosyl-L-methionine + phosphate + diphosphate. It functions in the pathway amino-acid biosynthesis; S-adenosyl-L-methionine biosynthesis; S-adenosyl-L-methionine from L-methionine: step 1/1. Functionally, catalyzes the formation of S-adenosylmethionine (AdoMet) from methionine and ATP. The overall synthetic reaction is composed of two sequential steps, AdoMet formation and the subsequent tripolyphosphate hydrolysis which occurs prior to release of AdoMet from the enzyme. The polypeptide is S-adenosylmethionine synthase (Synechococcus sp. (strain WH7803)).